Reading from the N-terminus, the 101-residue chain is Small ribosomal subunit protein uS14 (101 aa).

The span at 1–10 (MAKKSSVEKN) shows a compositional bias: basic and acidic residues. The interval 1-23 (MAKKSSVEKNNRRKRMAKNAAPK) is disordered. The segment covering 11 to 23 (NRRKRMAKNAAPK) has biased composition (basic residues).

It belongs to the universal ribosomal protein uS14 family. Part of the 30S ribosomal subunit. Contacts proteins S3 and S10.

Its function is as follows. Binds 16S rRNA, required for the assembly of 30S particles and may also be responsible for determining the conformation of the 16S rRNA at the A site. The sequence is that of Small ribosomal subunit protein uS14 from Bradyrhizobium sp. (strain BTAi1 / ATCC BAA-1182).